Here is a 212-residue protein sequence, read N- to C-terminus: Synaptosomal-associated protein 25 (212 aa).

T-SNARE coiled-coil homology domains follow at residues 26–88 and 148–210; these read QGVA…LSGM and DARE…AHQL.

Belongs to the SNAP-25 family. As to expression, exclusively found in brain and ganglia.

It localises to the synapse. Its subcellular location is the synaptosome. May play an important role in the synaptic function of specific neuronal systems. Associates with proteins involved in vesicle docking and membrane fusion. The sequence is that of Synaptosomal-associated protein 25 (Snap25) from Drosophila melanogaster (Fruit fly).